Reading from the N-terminus, the 331-residue chain is N-arachidonyl glycine receptor (331 aa).

The Extracellular portion of the chain corresponds to methionine 1–leucine 26. Asparagine 14 carries an N-linked (GlcNAc...) asparagine glycan. Residues valine 27–phenylalanine 47 form a helical membrane-spanning segment. At serine 48–threonine 56 the chain is on the cytoplasmic side. The helical transmembrane segment at valine 57–phenylalanine 77 threads the bilayer. Over arginine 78–glutamine 95 the chain is Extracellular. An intrachain disulfide couples cysteine 94 to cysteine 172. A helical membrane pass occupies residues isoleucine 96–serine 116. Residues alanine 117–alanine 138 lie on the Cytoplasmic side of the membrane. Residues valine 139 to leucine 159 traverse the membrane as a helical segment. Over tyrosine 160–arginine 191 the chain is Extracellular. Residues leucine 192 to histidine 212 form a helical membrane-spanning segment. At asparagine 213–arginine 232 the chain is on the cytoplasmic side. The chain crosses the membrane as a helical span at residues isoleucine 233–alanine 253. The Extracellular portion of the chain corresponds to phenylalanine 254–glycine 268. A helical membrane pass occupies residues alanine 269–valine 289. Residues serine 290–leucine 331 are Cytoplasmic-facing. At serine 322 the chain carries Phosphoserine.

Belongs to the G-protein coupled receptor 1 family. Expressed in midpiece of spermatozoon (at protein level). Most abundant in testis and spleen. Highly expressed in CD4 and CD8-positive T-cells as well as CD19-positive B-cells.

It localises to the cell membrane. It is found in the cytoplasmic vesicle membrane. In terms of biological role, g protein-coupled receptor (GPCR) that plays a role in diverse physiological processes particularly within the immune and nervous systems. Becomes active when triggered by various endogenous ligands including endocannabinoid N-arachidonyl glycine (NAGly), delta-9-tetrahydrocannabinol or resolvin D2/RvD2 derived from the omega-3 fatty acid docosahexaenoic acid (DHA). Upon RvD2 binding, facilitates the resolution of inflammation, aiding in tissue repair and homeostasis. Mechanistically, RvD2 ligation initiates Galphas protein coupling, activation of cAMP-PKA signaling pathway and phosphorylation of STAT3, leading to RvD2-stimulated macrophage phagocytosis. Mediates NAGly-induced process of reorganization of actin filaments and induction of acrosomal exocytosis. Activation by N-arachidonoyl glycine (NAGly) can also induce apoptosis in macrophages. Plays a role in homeostasis of CD8+ subsets of intraepithelial lymphocytes (IELs) (CD8alphaalpha and CD8alphabeta IELs) in small intestine by supporting preferential migration of CD8alphaalpha T-cells to intraepithelial compartment over lamina propria compartment, and by mediating their reconstitution into small intestine after bone marrow transplant. Also participates in hypotensive responses, mediating reduction in intraocular and blood pressure. This is N-arachidonyl glycine receptor (GPR18) from Homo sapiens (Human).